The following is a 156-amino-acid chain: Transcription antitermination protein NusB (156 aa).

The protein belongs to the NusB family.

Involved in transcription antitermination. Required for transcription of ribosomal RNA (rRNA) genes. Binds specifically to the boxA antiterminator sequence of the ribosomal RNA (rrn) operons. The protein is Transcription antitermination protein NusB of Rickettsia massiliae (strain Mtu5).